We begin with the raw amino-acid sequence, 592 residues long: Thiol:disulfide interchange protein DsbD (592 aa).

A signal peptide spans 1–19 (MKLIASFSIFMLMSIWSFA). Cystine bridges form between Cys-130-Cys-136 and Cys-204-Cys-326. A run of 8 helical transmembrane segments spans residues 186 to 206 (IWVL…PCVF), 229 to 249 (FVLS…LGLV), 265 to 285 (IILG…FGAW), 318 to 338 (ISGL…LLYI), 345 to 365 (LLGF…LILF), 379 to 399 (WMNI…LMFV), 406 to 426 (MATD…FYVM), and 440 to 460 (ALVI…TIFG). Residues 443 to 592 (IFIGLFASAM…AFAAHAKNIL (150 aa)) form the Thioredoxin domain. A disulfide bridge links Cys-508 with Cys-511.

Belongs to the thioredoxin family. DsbD subfamily.

The protein resides in the cell inner membrane. The enzyme catalyses [protein]-dithiol + NAD(+) = [protein]-disulfide + NADH + H(+). The catalysed reaction is [protein]-dithiol + NADP(+) = [protein]-disulfide + NADPH + H(+). Its function is as follows. Required to facilitate the formation of correct disulfide bonds in some periplasmic proteins and for the assembly of the periplasmic c-type cytochromes. Acts by transferring electrons from cytoplasmic thioredoxin to the periplasm. This transfer involves a cascade of disulfide bond formation and reduction steps. In Pseudoalteromonas atlantica (strain T6c / ATCC BAA-1087), this protein is Thiol:disulfide interchange protein DsbD.